The following is a 1152-amino-acid chain: DNA-directed RNA polymerase subunit beta' (1152 aa).

Zn(2+) contacts are provided by Cys60, Cys62, Cys75, and Cys78. Residues Asp449, Asp451, and Asp453 each contribute to the Mg(2+) site. Cys779, Cys853, Cys860, and Cys863 together coordinate Zn(2+).

It belongs to the RNA polymerase beta' chain family. As to quaternary structure, the RNAP catalytic core consists of 2 alpha, 1 beta, 1 beta' and 1 omega subunit. When a sigma factor is associated with the core the holoenzyme is formed, which can initiate transcription. Mg(2+) serves as cofactor. Zn(2+) is required as a cofactor.

It catalyses the reaction RNA(n) + a ribonucleoside 5'-triphosphate = RNA(n+1) + diphosphate. DNA-dependent RNA polymerase catalyzes the transcription of DNA into RNA using the four ribonucleoside triphosphates as substrates. This is DNA-directed RNA polymerase subunit beta' from Carboxydothermus hydrogenoformans (strain ATCC BAA-161 / DSM 6008 / Z-2901).